Consider the following 376-residue polypeptide: UPF0754 membrane protein Sca_1420 (376 aa).

The next 2 helical transmembrane spans lie at 4–24 and 356–376; these read FLVI…TNII and LLGF…ALFV.

This sequence belongs to the UPF0754 family.

The protein localises to the cell membrane. This is UPF0754 membrane protein Sca_1420 from Staphylococcus carnosus (strain TM300).